A 680-amino-acid polypeptide reads, in one-letter code: Potassium-transporting ATPase ATP-binding subunit (680 aa).

Transmembrane regions (helical) follow at residues 37–57 (VIFVTEAMAALVTLFFVLDVA), 69–89 (IAAWLWFTVLFATFAEAVAEG), 223–243 (ILLSGLTLIFLIAVVTLWGLA), and 257–277 (ALLVTLIPTTIGGLLSAIGIA). The active-site 4-aspartylphosphate intermediate is aspartate 307. ATP is bound by residues aspartate 344, glutamate 348, 375–382 (FTAETRLS), and lysine 393. Residues aspartate 516 and aspartate 520 each coordinate Mg(2+). 3 consecutive transmembrane segments (helical) span residues 586 to 606 (FAIIPALFVTTYPALGVLNIM), 614 to 634 (AILSAVIFNALIIVALIPLAL), and 652 to 672 (LLVYGLGGLVLPFAGIKLIDL).

The protein belongs to the cation transport ATPase (P-type) (TC 3.A.3) family. Type IA subfamily. As to quaternary structure, the system is composed of three essential subunits: KdpA, KdpB and KdpC.

Its subcellular location is the cell inner membrane. It catalyses the reaction K(+)(out) + ATP + H2O = K(+)(in) + ADP + phosphate + H(+). Functionally, part of the high-affinity ATP-driven potassium transport (or Kdp) system, which catalyzes the hydrolysis of ATP coupled with the electrogenic transport of potassium into the cytoplasm. This subunit is responsible for energy coupling to the transport system and for the release of the potassium ions to the cytoplasm. The chain is Potassium-transporting ATPase ATP-binding subunit from Rhizobium meliloti (strain 1021) (Ensifer meliloti).